A 329-amino-acid polypeptide reads, in one-letter code: Phenylalanine--tRNA ligase alpha subunit (329 aa).

The protein belongs to the class-II aminoacyl-tRNA synthetase family. Phe-tRNA synthetase alpha subunit type 1 subfamily. As to quaternary structure, tetramer of two alpha and two beta subunits. Mg(2+) is required as a cofactor.

The protein localises to the cytoplasm. It carries out the reaction tRNA(Phe) + L-phenylalanine + ATP = L-phenylalanyl-tRNA(Phe) + AMP + diphosphate + H(+). The sequence is that of Phenylalanine--tRNA ligase alpha subunit (pheS) from Buchnera aphidicola subsp. Acyrthosiphon pisum (strain APS) (Acyrthosiphon pisum symbiotic bacterium).